Here is a 365-residue protein sequence, read N- to C-terminus: Aminomethyltransferase (365 aa).

It belongs to the GcvT family. In terms of assembly, the glycine cleavage system is composed of four proteins: P, T, L and H.

It carries out the reaction N(6)-[(R)-S(8)-aminomethyldihydrolipoyl]-L-lysyl-[protein] + (6S)-5,6,7,8-tetrahydrofolate = N(6)-[(R)-dihydrolipoyl]-L-lysyl-[protein] + (6R)-5,10-methylene-5,6,7,8-tetrahydrofolate + NH4(+). Functionally, the glycine cleavage system catalyzes the degradation of glycine. This chain is Aminomethyltransferase, found in Cronobacter sakazakii (strain ATCC BAA-894) (Enterobacter sakazakii).